An 899-amino-acid chain; its full sequence is Linoleate 13S-lipoxygenase 2-1, chloroplastic (899 aa).

The transit peptide at 1 to 40 (MLKPQLQQSSQSTKALIPSWNTNPLFLASFPINILNKNFR) directs the protein to the chloroplast. Residues 78–200 (VQKQVNLNLS…DNPDKRIFFT (123 aa)) form the PLAT domain. The region spanning 203 to 899 (SYLPSQTPSG…GKGVPYSISI (697 aa)) is the Lipoxygenase domain. A disordered region spans residues 252 to 287 (SNNDDAKRPVLGGKELPYPRRCKTGRPRSKKDPLSE). The segment covering 271–280 (RRCKTGRPRS) has biased composition (basic residues). 5 residues coordinate Fe cation: His-557, His-562, His-749, Asn-753, and Ile-899.

Belongs to the lipoxygenase family. In terms of assembly, monomer. It depends on Fe cation as a cofactor. As to expression, expressed in leaves and floral buds.

The protein resides in the plastid. Its subcellular location is the chloroplast stroma. It is found in the chloroplast thylakoid. It carries out the reaction (9Z,12Z)-octadecadienoate + O2 = (13S)-hydroperoxy-(9Z,11E)-octadecadienoate. It catalyses the reaction (9Z,12Z,15Z)-octadecatrienoate + O2 = (13S)-hydroperoxy-(9Z,11E,15Z)-octadecatrienoate. It functions in the pathway lipid metabolism; oxylipin biosynthesis. Its function is as follows. Plant lipoxygenase involved in a number of diverse aspects of plant physiology including growth and development, pest resistance, and senescence. May not be involved in the bulk production of jasmonate upon wounding. Catalyzes the hydroperoxidation of lipids containing a cis,cis-1,4-pentadiene structure. Linolenic acid is the preferred substrate, before linoleic and arachidonic acids. Also has some activity with phosphatidylglycerol, but not with galactolipids. This Solanum tuberosum (Potato) protein is Linoleate 13S-lipoxygenase 2-1, chloroplastic.